Consider the following 251-residue polypeptide: Probable transcriptional regulatory protein Mflv_3828 (251 aa).

This sequence belongs to the TACO1 family.

It is found in the cytoplasm. This chain is Probable transcriptional regulatory protein Mflv_3828, found in Mycolicibacterium gilvum (strain PYR-GCK) (Mycobacterium gilvum (strain PYR-GCK)).